We begin with the raw amino-acid sequence, 209 residues long: Glutathione S-transferase F7 (209 aa).

Residues 2-83 (AGIKVFGHPA…YIAHFYSDKG (82 aa)) enclose the GST N-terminal domain. Residues 12-13 (ST), 41-42 (HK), 54-55 (KV), and 67-68 (ES) each bind glutathione. A GST C-terminal domain is found at 90 to 209 (GSKDIAGIAM…TSRPSAKKVL (120 aa)).

Belongs to the GST superfamily. Phi family.

It is found in the cytoplasm. The protein localises to the cytosol. The enzyme catalyses RX + glutathione = an S-substituted glutathione + a halide anion + H(+). In terms of biological role, may be involved in the conjugation of reduced glutathione to a wide number of exogenous and endogenous hydrophobic electrophiles and have a detoxification role against certain herbicides. The polypeptide is Glutathione S-transferase F7 (Arabidopsis thaliana (Mouse-ear cress)).